The following is a 118-amino-acid chain: D-dopachrome decarboxylase (118 aa).

Pro-2 carries the N-acetylproline modification. Lys-33 is subject to N6-acetyllysine.

The protein belongs to the MIF family. Homotrimer. In terms of tissue distribution, highly expressed in the liver and at lower levels in the heart, lung and pancreas.

It localises to the cytoplasm. It carries out the reaction D-dopachrome + H(+) = 5,6-dihydroxyindole + CO2. Tautomerization of D-dopachrome with decarboxylation to give 5,6-dihydroxyindole (DHI). The chain is D-dopachrome decarboxylase (DDT) from Homo sapiens (Human).